The sequence spans 684 residues: Probable potassium transport system protein Kup (684 aa).

12 helical membrane-spanning segments follow: residues 19–39 (ALLV…LYVM), 61–81 (VSLI…LIAL), 104–124 (WLVL…MLTP), 151–171 (QVIW…RFGT), 177–197 (AFGP…FIAL), 223–243 (MGLF…ALYS), 255–275 (LSWP…AVWL), 303–323 (LGAI…LISG), 352–372 (LYIP…IGYF), 381–401 (AYGL…YQYL), 407–427 (PAVI…VFFI), and 433–453 (FLHG…VMYV).

It belongs to the HAK/KUP transporter (TC 2.A.72) family.

It localises to the cell membrane. It carries out the reaction K(+)(in) + H(+)(in) = K(+)(out) + H(+)(out). Its function is as follows. Transport of potassium into the cell. Likely operates as a K(+):H(+) symporter. The protein is Probable potassium transport system protein Kup of Lacticaseibacillus casei (strain BL23) (Lactobacillus casei).